The following is a 508-amino-acid chain: Photosystem II CP47 reaction center protein (508 aa).

Transmembrane regions (helical) follow at residues 21-36, 101-115, 140-156, 203-218, 237-252, and 457-472; these read SVHI…WAGS, IVFS…IWHW, GIHL…FGAF, IAAG…FHLS, VLSS…AFVV, and SFAL…HGAR.

It belongs to the PsbB/PsbC family. PsbB subfamily. As to quaternary structure, PSII is composed of 1 copy each of membrane proteins PsbA, PsbB, PsbC, PsbD, PsbE, PsbF, PsbH, PsbI, PsbJ, PsbK, PsbL, PsbM, PsbT, PsbX, PsbY, PsbZ, Psb30/Ycf12, at least 3 peripheral proteins of the oxygen-evolving complex and a large number of cofactors. It forms dimeric complexes. The cofactor is Binds multiple chlorophylls. PSII binds additional chlorophylls, carotenoids and specific lipids..

The protein localises to the plastid. It localises to the chloroplast thylakoid membrane. In terms of biological role, one of the components of the core complex of photosystem II (PSII). It binds chlorophyll and helps catalyze the primary light-induced photochemical processes of PSII. PSII is a light-driven water:plastoquinone oxidoreductase, using light energy to abstract electrons from H(2)O, generating O(2) and a proton gradient subsequently used for ATP formation. The protein is Photosystem II CP47 reaction center protein of Panax ginseng (Korean ginseng).